The sequence spans 351 residues: Phosphoribosylformylglycinamidine cyclo-ligase (351 aa).

This sequence belongs to the AIR synthase family.

It is found in the cytoplasm. The catalysed reaction is 2-formamido-N(1)-(5-O-phospho-beta-D-ribosyl)acetamidine + ATP = 5-amino-1-(5-phospho-beta-D-ribosyl)imidazole + ADP + phosphate + H(+). Its pathway is purine metabolism; IMP biosynthesis via de novo pathway; 5-amino-1-(5-phospho-D-ribosyl)imidazole from N(2)-formyl-N(1)-(5-phospho-D-ribosyl)glycinamide: step 2/2. In Azotobacter vinelandii (strain DJ / ATCC BAA-1303), this protein is Phosphoribosylformylglycinamidine cyclo-ligase.